We begin with the raw amino-acid sequence, 177 residues long: Bifunctional protein PyrR (177 aa).

Residues 101–113 (IILIDDVLYTGRT) carry the PRPP-binding motif.

The protein belongs to the purine/pyrimidine phosphoribosyltransferase family. PyrR subfamily.

It carries out the reaction UMP + diphosphate = 5-phospho-alpha-D-ribose 1-diphosphate + uracil. Its function is as follows. Regulates the transcription of the pyrimidine nucleotide (pyr) operon in response to exogenous pyrimidines. In terms of biological role, also displays a weak uracil phosphoribosyltransferase activity which is not physiologically significant. The chain is Bifunctional protein PyrR from Endomicrobium trichonymphae.